A 385-amino-acid chain; its full sequence is NADH-ubiquinone oxidoreductase chain 2 (385 aa).

Transmembrane regions (helical) follow at residues Pro-12–Leu-32, Val-34–Ala-50, Phe-66–Leu-86, Val-112–Ala-132, Val-161–Phe-181, Leu-200–Phe-220, Leu-227–Leu-247, Ala-268–Phe-288, Trp-291–Ile-311, and Leu-354–Leu-374.

The protein belongs to the complex I subunit 2 family.

The protein resides in the mitochondrion inner membrane. The enzyme catalyses a ubiquinone + NADH + 5 H(+)(in) = a ubiquinol + NAD(+) + 4 H(+)(out). Functionally, core subunit of the mitochondrial membrane respiratory chain NADH dehydrogenase (Complex I) that is believed to belong to the minimal assembly required for catalysis. Complex I functions in the transfer of electrons from NADH to the respiratory chain. The immediate electron acceptor for the enzyme is believed to be ubiquinone. This is NADH-ubiquinone oxidoreductase chain 2 (ND2) from Metridium senile (Brown sea anemone).